The sequence spans 119 residues: Small ribosomal subunit protein bS6 (119 aa).

Residues 96 to 119 (VTEPSPLARSQEKDEEEGGRTAEA) are disordered.

Belongs to the bacterial ribosomal protein bS6 family.

Binds together with bS18 to 16S ribosomal RNA. In Alkalilimnicola ehrlichii (strain ATCC BAA-1101 / DSM 17681 / MLHE-1), this protein is Small ribosomal subunit protein bS6.